The following is a 429-amino-acid chain: S-adenosylmethionine synthase (429 aa).

Residue glutamate 9 participates in Mg(2+) binding. Histidine 15 serves as a coordination point for ATP. Glutamate 43 provides a ligand contact to K(+). Residues glutamate 56 and glutamine 99 each coordinate L-methionine. Residues 167–169 (DGK), 235–238 (SGRF), aspartate 246, 252–253 (RK), alanine 269, lysine 273, and lysine 277 each bind ATP. Aspartate 246 lines the L-methionine pocket. Residue lysine 277 participates in L-methionine binding.

The protein belongs to the AdoMet synthase family. Homotetramer. Mn(2+) is required as a cofactor. The cofactor is Mg(2+). Requires Co(2+) as cofactor. It depends on K(+) as a cofactor.

The protein localises to the cytoplasm. The catalysed reaction is L-methionine + ATP + H2O = S-adenosyl-L-methionine + phosphate + diphosphate. It functions in the pathway amino-acid biosynthesis; S-adenosyl-L-methionine biosynthesis; S-adenosyl-L-methionine from L-methionine: step 1/1. Functionally, catalyzes the formation of S-adenosylmethionine from methionine and ATP. The reaction comprises two steps that are both catalyzed by the same enzyme: formation of S-adenosylmethionine (AdoMet) and triphosphate, and subsequent hydrolysis of the triphosphate. The polypeptide is S-adenosylmethionine synthase (SAMS) (Carica papaya (Papaya)).